A 555-amino-acid polypeptide reads, in one-letter code: CTP synthase (555 aa).

An amidoligase domain region spans residues 1–279; the sequence is MATNRAKSST…DNYIIRRLNL (279 aa). Ser-21 serves as a coordination point for CTP. Position 21 (Ser-21) interacts with UTP. Residues 22 to 27 and Asp-79 contribute to the ATP site; that span reads SLGKGL. 2 residues coordinate Mg(2+): Asp-79 and Glu-153. CTP is bound by residues 160–162, 200–205, and Lys-236; these read DIE and KTKPTQ. UTP-binding positions include 200–205 and Lys-236; that span reads KTKPTQ. The region spanning 304 to 553 is the Glutamine amidotransferase type-1 domain; it reads TIGIVGKYID…VDAALKHQAG (250 aa). Gly-367 contributes to the L-glutamine binding site. The Nucleophile; for glutamine hydrolysis role is filled by Cys-394. L-glutamine contacts are provided by residues 395–398, Glu-417, and Arg-478; that span reads LGLQ. Residues His-526 and Glu-528 contribute to the active site.

This sequence belongs to the CTP synthase family. As to quaternary structure, homotetramer.

The enzyme catalyses UTP + L-glutamine + ATP + H2O = CTP + L-glutamate + ADP + phosphate + 2 H(+). The catalysed reaction is L-glutamine + H2O = L-glutamate + NH4(+). It catalyses the reaction UTP + NH4(+) + ATP = CTP + ADP + phosphate + 2 H(+). It participates in pyrimidine metabolism; CTP biosynthesis via de novo pathway; CTP from UDP: step 2/2. Its activity is regulated as follows. Allosterically activated by GTP, when glutamine is the substrate; GTP has no effect on the reaction when ammonia is the substrate. The allosteric effector GTP functions by stabilizing the protein conformation that binds the tetrahedral intermediate(s) formed during glutamine hydrolysis. Inhibited by the product CTP, via allosteric rather than competitive inhibition. Functionally, catalyzes the ATP-dependent amination of UTP to CTP with either L-glutamine or ammonia as the source of nitrogen. Regulates intracellular CTP levels through interactions with the four ribonucleotide triphosphates. The polypeptide is CTP synthase (Corynebacterium jeikeium (strain K411)).